We begin with the raw amino-acid sequence, 63 residues long: Large ribosomal subunit protein uL29 (63 aa).

The protein belongs to the universal ribosomal protein uL29 family.

This is Large ribosomal subunit protein uL29 from Hahella chejuensis (strain KCTC 2396).